The chain runs to 697 residues: Polyribonucleotide nucleotidyltransferase (697 aa).

2 residues coordinate Mg(2+): aspartate 484 and aspartate 490. The 60-residue stretch at proline 551–isoleucine 610 folds into the KH domain. Positions glycine 620–lysine 688 constitute an S1 motif domain.

It belongs to the polyribonucleotide nucleotidyltransferase family. It depends on Mg(2+) as a cofactor.

It localises to the cytoplasm. It catalyses the reaction RNA(n+1) + phosphate = RNA(n) + a ribonucleoside 5'-diphosphate. Functionally, involved in mRNA degradation. Catalyzes the phosphorolysis of single-stranded polyribonucleotides processively in the 3'- to 5'-direction. The sequence is that of Polyribonucleotide nucleotidyltransferase from Geobacter sulfurreducens (strain ATCC 51573 / DSM 12127 / PCA).